A 702-amino-acid polypeptide reads, in one-letter code: Vertnin (702 aa).

Positions 562 to 625 are disordered; sequence VPTLGKGGQE…QGQPHSGPLL (64 aa). The span at 570–582 shows a compositional bias: basic and acidic residues; it reads QEAEEKQEKEAGR.

Belongs to the vertnin family.

The protein localises to the nucleus. Acts as a transcription factor that regulates development of thoracic vertebrae. The chain is Vertnin from Homo sapiens (Human).